A 375-amino-acid polypeptide reads, in one-letter code: MDVTSQARGVGLEMYPGTAQPAAPNTTSPELNLSHPLLGTALANGTGELSEHQQYVIGLFLSCLYTIFLFPIGFVGNILILVVNISFREKMTIPDLYFINLAVADLILVADSLIEVFNLHERYYDIAVLCTFMSLFLQVNMYSSVFFLTWMSFDRYIALARAMRCSLFRTKHHARLSCGLIWMASVSATLVPFTAVHLQHTDEACFCFADVREVQWLEVTLGFIVPFAIIGLCYSLIVRVLVRAHRHRGLRPRRQKALRMILAVVLVFFVCWLPENVFISVHLLQRTQPGAAPCKQSFRHAHPLTGHIVNLAAFSNSCLNPLIYSFLGETFRDKLRLYIEQKTNLPALNRFCHAALKAVIPDSTEQSDVRFSSAV.

N-acetylmethionine is present on Met-1. At Met-1 to Ser-62 the chain is on the extracellular side. Asn-25, Asn-32, and Asn-44 each carry an N-linked (GlcNAc...) asparagine glycan. The chain crosses the membrane as a helical span at residues Cys-63 to Asn-84. At Ile-85–Leu-96 the chain is on the cytoplasmic side. The helical transmembrane segment at Tyr-97 to His-120 threads the bilayer. The Extracellular segment spans residues Glu-121–Phe-132. Cys-130 and Cys-207 form a disulfide bridge. Residues Met-133 to Phe-153 traverse the membrane as a helical segment. At Asp-154–Arg-175 the chain is on the cytoplasmic side. Residues Leu-176–Thr-194 traverse the membrane as a helical segment. Topologically, residues Ala-195 to Thr-220 are extracellular. The helical transmembrane segment at Leu-221–Leu-236 threads the bilayer. Topologically, residues Ile-237–Arg-259 are cytoplasmic. The helical transmembrane segment at Met-260–Ser-280 threads the bilayer. The Extracellular segment spans residues Val-281–Gly-306. A helical membrane pass occupies residues His-307–Leu-327. Topologically, residues Gly-328–Val-375 are cytoplasmic.

Belongs to the G-protein coupled receptor 1 family. As to quaternary structure, homodimer. Heterodimer; heterodimerizes with other G-protein-coupled receptor (GPCRs) like CRHR1, HTR1A and PAQR8. Interacts (via C-terminus tail motif) with DLG4 (via N-terminus tandem pair of PDZ domains); the interaction is direct and induces the increase of GPER1 protein levels residing at the plasma membrane surface in a estradiol-independent manner. Interacts with RAMP3; the interaction confers proper subcellular localization and function in cardioprotection. Interacts with KRT7 and KRT8. Interacts with EGFR; the interaction increases after agonist-induced stimulation in cancer-associated fibroblasts (CAF). Interacts with EGFR and ESR1. In terms of processing, ubiquitinated; ubiquitination occurs at the plasma membrane and leads to proteasome-mediated degradation. Post-translationally, glycosylated. In terms of tissue distribution, expressed in placenta, endothelial and epithelial cells, non laboring and laboring term myometrium, fibroblasts and cancer-associated fibroblasts (CAF), prostate cancer cells and invasive adenocarcinoma (at protein level). Ubiquitously expressed, but is most abundant in placenta. In brain regions, expressed as a 2.8 kb transcript in basal forebrain, frontal cortex, thalamus, hippocampus, caudate and putamen.

Its subcellular location is the nucleus. It localises to the cytoplasm. The protein resides in the perinuclear region. The protein localises to the cytoskeleton. It is found in the cell membrane. Its subcellular location is the basolateral cell membrane. It localises to the cytoplasmic vesicle membrane. The protein resides in the early endosome. The protein localises to the recycling endosome. It is found in the golgi apparatus membrane. Its subcellular location is the golgi apparatus. It localises to the trans-Golgi network. The protein resides in the endoplasmic reticulum membrane. The protein localises to the cell projection. It is found in the dendrite. Its subcellular location is the dendritic spine membrane. It localises to the axon. The protein resides in the postsynaptic density. The protein localises to the mitochondrion membrane. G-protein coupled estrogen receptor that binds to 17-beta-estradiol (E2) with high affinity, leading to rapid and transient activation of numerous intracellular signaling pathways. Stimulates cAMP production, calcium mobilization and tyrosine kinase Src inducing the release of heparin-bound epidermal growth factor (HB-EGF) and subsequent transactivation of the epidermal growth factor receptor (EGFR), activating downstream signaling pathways such as PI3K/Akt and ERK/MAPK. Mediates pleiotropic functions among others in the cardiovascular, endocrine, reproductive, immune and central nervous systems. Has a role in cardioprotection by reducing cardiac hypertrophy and perivascular fibrosis in a RAMP3-dependent manner. Regulates arterial blood pressure by stimulating vasodilation and reducing vascular smooth muscle and microvascular endothelial cell proliferation. Plays a role in blood glucose homeostasis contributing to the insulin secretion response by pancreatic beta cells. Triggers mitochondrial apoptosis during pachytene spermatocyte differentiation. Stimulates uterine epithelial cell proliferation. Enhances uterine contractility in response to oxytocin. Contributes to thymic atrophy by inducing apoptosis. Attenuates TNF-mediated endothelial expression of leukocyte adhesion molecules. Promotes neuritogenesis in developing hippocampal neurons. Plays a role in acute neuroprotection against NMDA-induced excitotoxic neuronal death. Increases firing activity and intracellular calcium oscillations in luteinizing hormone-releasing hormone (LHRH) neurons. Inhibits early osteoblast proliferation at growth plate during skeletal development. Inhibits mature adipocyte differentiation and lipid accumulation. Involved in the recruitment of beta-arrestin 2 ARRB2 at the plasma membrane in epithelial cells. Also functions as a receptor for aldosterone mediating rapid regulation of vascular contractibility through the PI3K/ERK signaling pathway. Involved in cancer progression regulation. Stimulates cancer-associated fibroblast (CAF) proliferation by a rapid genomic response through the EGFR/ERK transduction pathway. Associated with EGFR, may act as a transcription factor activating growth regulatory genes (c-fos, cyclin D1). Promotes integrin alpha-5/beta-1 and fibronectin (FN) matrix assembly in breast cancer cells. The polypeptide is G-protein coupled estrogen receptor 1 (Homo sapiens (Human)).